A 185-amino-acid chain; its full sequence is PXMP2/4 family protein 4 (185 aa).

3 consecutive transmembrane segments (helical) span residues 63 to 83 (MAVFGFAVTGPLFHYWFKYLD), 100 to 120 (IDQVVCSPVFNFLFFSGMGIL), and 141 to 161 (VSDCVVWPFINFVNFAYISSI).

Belongs to the peroxisomal membrane protein PXMP2/4 family.

It localises to the membrane. In Dictyostelium discoideum (Social amoeba), this protein is PXMP2/4 family protein 4.